An 830-amino-acid polypeptide reads, in one-letter code: Lon protease (830 aa).

Residues 1–28 (MTFDTNDDSIAKNSLAPYNQETEQQQEE) form a disordered region. Residues 50–245 (IPILPLRDVV…LVITHLTHEA (196 aa)) enclose the Lon N-terminal domain. 397-404 (GPPGVGKT) serves as a coordination point for ATP. The 182-residue stretch at 633–814 (TLPPGVALGL…DEVLPLAFSE (182 aa)) folds into the Lon proteolytic domain. Catalysis depends on residues Ser-720 and Lys-763.

This sequence belongs to the peptidase S16 family. In terms of assembly, homohexamer. Organized in a ring with a central cavity.

The protein localises to the cytoplasm. It carries out the reaction Hydrolysis of proteins in presence of ATP.. Its function is as follows. ATP-dependent serine protease that mediates the selective degradation of mutant and abnormal proteins as well as certain short-lived regulatory proteins. Required for cellular homeostasis and for survival from DNA damage and developmental changes induced by stress. Degrades polypeptides processively to yield small peptide fragments that are 5 to 10 amino acids long. Binds to DNA in a double-stranded, site-specific manner. The sequence is that of Lon protease from Lawsonia intracellularis (strain PHE/MN1-00).